The following is a 160-amino-acid chain: G-protein-signaling modulator 3 (160 aa).

A disordered region spans residues 1–55 (MEAERPQEEEDGEQGPPQDEEGWPPPNSTTRPWRSAPPSPPPPGTRHTALGPRSA). Over residues 7-22 (QEEEDGEQGPPQDEEG) the composition is skewed to acidic residues. Ser-35, Ser-39, Ser-56, and Ser-59 each carry phosphoserine. Residues 35–44 (SAPPSPPPPG) show a composition bias toward pro residues. Thr-62 carries the post-translational modification Phosphothreonine. 3 consecutive GoLoco domains span residues 62-84 (TELL…RATF), 104-126 (REQL…RSEP), and 132-155 (GQEL…RSRP).

In terms of tissue distribution, expressed in heart, placenta, lung and liver.

The protein localises to the cytoplasm. Its function is as follows. Interacts with subunit of G(i) alpha proteins and regulates the activation of G(i) alpha proteins. The chain is G-protein-signaling modulator 3 (GPSM3) from Homo sapiens (Human).